Reading from the N-terminus, the 182-residue chain is ATP-dependent protease subunit HslV (182 aa).

Thr-6 is a catalytic residue. The Na(+) site is built by Ala-164, Cys-167, and Thr-170.

It belongs to the peptidase T1B family. HslV subfamily. As to quaternary structure, a double ring-shaped homohexamer of HslV is capped on each side by a ring-shaped HslU homohexamer. The assembly of the HslU/HslV complex is dependent on binding of ATP.

It localises to the cytoplasm. The catalysed reaction is ATP-dependent cleavage of peptide bonds with broad specificity.. Its activity is regulated as follows. Allosterically activated by HslU binding. Protease subunit of a proteasome-like degradation complex believed to be a general protein degrading machinery. This is ATP-dependent protease subunit HslV from Borrelia garinii subsp. bavariensis (strain ATCC BAA-2496 / DSM 23469 / PBi) (Borreliella bavariensis).